A 180-amino-acid polypeptide reads, in one-letter code: uncharacterized protein (180 aa).

The disordered stretch occupies residues 1 to 93 (MPSSVPKTSI…LPRRRNPGWV (93 aa)). Low complexity-rich tracts occupy residues 9-25 (SIESLGSPSSLSSSQAS) and 47-64 (LTSSTESLGYLSSLSSSQ).

This is an uncharacterized protein from Homo sapiens (Human).